A 580-amino-acid polypeptide reads, in one-letter code: Acyl-coenzyme A synthetase ACSM4, mitochondrial (580 aa).

The N-terminal 22 residues, 1 to 22, are a transit peptide targeting the mitochondrion; the sequence is MKVLLHCQRLRFIWLAKPAGRH. Residues 229-237, 368-373, D455, R470, and K566 contribute to the ATP site; these read TSGTTGSPK and EGYGQT.

Belongs to the ATP-dependent AMP-binding enzyme family. Requires Mg(2+) as cofactor. The cofactor is Mn(2+).

It is found in the mitochondrion. The catalysed reaction is a medium-chain fatty acid + ATP + CoA = a medium-chain fatty acyl-CoA + AMP + diphosphate. It catalyses the reaction hexanoate + ATP + CoA = hexanoyl-CoA + AMP + diphosphate. It carries out the reaction octanoate + ATP + CoA = octanoyl-CoA + AMP + diphosphate. The enzyme catalyses decanoate + ATP + CoA = decanoyl-CoA + AMP + diphosphate. The catalysed reaction is dodecanoate + ATP + CoA = dodecanoyl-CoA + AMP + diphosphate. Catalyzes the activation of fatty acids by CoA to produce an acyl-CoA, the first step in fatty acid metabolism. Capable of activating medium-chain fatty acids with a preference for C6-12 fatty acids. The sequence is that of Acyl-coenzyme A synthetase ACSM4, mitochondrial (Acsm4) from Mus musculus (Mouse).